The following is a 956-amino-acid chain: Chromatin assembly factor 1 subunit A (956 aa).

Residues 1 to 49 (MLEELECGAPGARGAATAMDCKDRPAFPVKKLIQARLPFKRLNLVPKGK) are binds to PCNA. A binds to CBX1 chromo shadow domain region spans residues 1-314 (MLEELECGAP…QHSSTSPFPT (314 aa)). Disordered regions lie at residues 45 to 65 (VPKGKADDMSDDQGTSVQSKS) and 122 to 155 (DSNEQPDSLVDHNKLNSEASPSREAINGQREDTG). Residues 56 to 65 (DQGTSVQSKS) show a composition bias toward polar residues. Phosphoserine occurs at positions 65, 123, 138, 141, and 143. Lys182 is covalently cross-linked (Glycyl lysine isopeptide (Lys-Gly) (interchain with G-Cter in SUMO1); alternate). A Glycyl lysine isopeptide (Lys-Gly) (interchain with G-Cter in SUMO2); alternate cross-link involves residue Lys182. The disordered stretch occupies residues 188–222 (VGCGGAGRRGDSQECSPRSCPELTSGPRMCPRKEQ). Phosphoserine is present on residues Ser206 and Ser224. Residues 233–246 (FKGKVPMVVLQDIL) carry the PxVxL motif motif. 2 disordered regions span residues 250–432 (PPQI…KRLR) and 599–639 (DSDE…VPHG). Low complexity-rich tracts occupy residues 282 to 296 (LSHSSLSSPSSTSSP) and 307 to 317 (SSTSPFPTSTP). Ser310 is modified (phosphoserine). Over residues 329 to 432 (STEKNKLRLQ…RKKEEEKRLR (104 aa)) the composition is skewed to basic and acidic residues. Composition is skewed to acidic residues over residues 599–610 (DSDEEWEEEEPG) and 618–633 (GDDDDDMGEDEDEDDG). Positions 642–678 (SEDEGVTEECADPENHKVRQKLKAKEWDEFLAKGKRF) are necessary for homodimerization and competence for chromatin assembly. The interval 660 to 956 (RQKLKAKEWD…TLTASPLGAS (297 aa)) is binds to p60. Thr722 is modified (phosphothreonine). The segment at 765-790 (LLSNHTGSPRSPSTTYLHTPTPSEDA) is disordered. The span at 767 to 786 (SNHTGSPRSPSTTYLHTPTP) shows a compositional bias: polar residues. Residues Ser772, Ser775, and Ser803 each carry the phosphoserine modification. Disordered regions lie at residues 844-873 (SVPSAPKEDSGSVPSTGPSQGTPISLKRKS) and 933-956 (SGAGGGVGVDTGKATLTASPLGAS). Positions 855–866 (SVPSTGPSQGTP) are enriched in polar residues. Thr865 is modified (phosphothreonine). Residues Ser868, Ser873, and Ser951 each carry the phosphoserine modification.

It belongs to the CHAF1A family. As to quaternary structure, homodimer. Part of the CAF-1 complex that contains RBBP4, CHAF1B and CHAF1A. CHAF1A binds directly to CHAF1B. Only minor amounts of RBBP4 are complexed with CHAF1A and CHAF1B in G1 phase. Interacts with PCNA; the interaction is direct. Interacts (via the PxVxL motif) with CBX5; the interaction is direct. Interacts with MBD1. Interacts with histones H3.1, H3.2 and H3.1t.

The protein localises to the nucleus. Its function is as follows. Acts as a component of the histone chaperone complex chromatin assembly factor 1 (CAF-1), which assembles histone octamers onto DNA during replication and repair. CAF-1 performs the first step of the nucleosome assembly process, bringing newly synthesized histones H3 and H4 to replicating DNA; histones H2A/H2B can bind to this chromatin precursor subsequent to DNA replication to complete the histone octamer. It may play a role in heterochromatin maintenance in proliferating cells by bringing newly synthesized cbx proteins to heterochromatic DNA replication foci. This Homo sapiens (Human) protein is Chromatin assembly factor 1 subunit A.